The sequence spans 95 residues: MSVDAATVRRIAHLARIAVTEDEVPHLQGELNAMLAFVEQLSEVDVDGVEPMTSVTPMQMKKRADVVNDGEIADQVVANAPSTEDHFFLVPKVVE.

This sequence belongs to the GatC family. In terms of assembly, heterotrimer of A, B and C subunits.

The catalysed reaction is L-glutamyl-tRNA(Gln) + L-glutamine + ATP + H2O = L-glutaminyl-tRNA(Gln) + L-glutamate + ADP + phosphate + H(+). It carries out the reaction L-aspartyl-tRNA(Asn) + L-glutamine + ATP + H2O = L-asparaginyl-tRNA(Asn) + L-glutamate + ADP + phosphate + 2 H(+). Its function is as follows. Allows the formation of correctly charged Asn-tRNA(Asn) or Gln-tRNA(Gln) through the transamidation of misacylated Asp-tRNA(Asn) or Glu-tRNA(Gln) in organisms which lack either or both of asparaginyl-tRNA or glutaminyl-tRNA synthetases. The reaction takes place in the presence of glutamine and ATP through an activated phospho-Asp-tRNA(Asn) or phospho-Glu-tRNA(Gln). This Rhodopseudomonas palustris (strain TIE-1) protein is Aspartyl/glutamyl-tRNA(Asn/Gln) amidotransferase subunit C.